Here is a 419-residue protein sequence, read N- to C-terminus: Gamma-glutamyl phosphate reductase (419 aa).

It belongs to the gamma-glutamyl phosphate reductase family.

Its subcellular location is the cytoplasm. The catalysed reaction is L-glutamate 5-semialdehyde + phosphate + NADP(+) = L-glutamyl 5-phosphate + NADPH + H(+). It participates in amino-acid biosynthesis; L-proline biosynthesis; L-glutamate 5-semialdehyde from L-glutamate: step 2/2. In terms of biological role, catalyzes the NADPH-dependent reduction of L-glutamate 5-phosphate into L-glutamate 5-semialdehyde and phosphate. The product spontaneously undergoes cyclization to form 1-pyrroline-5-carboxylate. This chain is Gamma-glutamyl phosphate reductase, found in Tolumonas auensis (strain DSM 9187 / NBRC 110442 / TA 4).